Here is a 214-residue protein sequence, read N- to C-terminus: Adenylate kinase (214 aa).

An ATP-binding site is contributed by 12–17; the sequence is GVGKGT. The interval 32-61 is NMP; the sequence is STGNIFRSQIASNSELGIKLKEIVESGGYV. Residues Thr-33, Arg-38, 59–61, 88–91, and Gln-95 contribute to the AMP site; these read GYV and GYPR. The interval 126 to 163 is LID; it reads GRRICPSCNAQYHIYFKKSKLDTKCEIDQSELIQRKDD. Arg-127 is a binding site for ATP. Residues Cys-130, Cys-133, Cys-150, and Asp-153 each coordinate Zn(2+). Residues Arg-160 and Arg-171 each contribute to the AMP site. Residue Lys-199 participates in ATP binding.

The protein belongs to the adenylate kinase family. As to quaternary structure, monomer.

Its subcellular location is the cytoplasm. It catalyses the reaction AMP + ATP = 2 ADP. Its pathway is purine metabolism; AMP biosynthesis via salvage pathway; AMP from ADP: step 1/1. In terms of biological role, catalyzes the reversible transfer of the terminal phosphate group between ATP and AMP. Plays an important role in cellular energy homeostasis and in adenine nucleotide metabolism. This Mycoplasmopsis pulmonis (strain UAB CTIP) (Mycoplasma pulmonis) protein is Adenylate kinase.